The chain runs to 353 residues: Tetrahedral aminopeptidase (353 aa).

Residues H68 and D182 each coordinate Zn(2+). E212 serves as the catalytic Proton acceptor. E213, D235, and H323 together coordinate Zn(2+).

It belongs to the peptidase M42 family. In terms of assembly, homododecamer. The assembly of six dimers results in a tetrahedral-shaped structure; all 12 active sites are located on the inside of the tetrahedron. Substrate access is granted by four pores with a maximal diameter of 18 Angstroms, allowing only small peptides and unfolded proteins access to the active site. Beside the four entry ports, TET contains 12 small product release openings, which are large enough to allow passage of only single amino acid residues. Zn(2+) serves as cofactor. It depends on Co(2+) as a cofactor.

With respect to regulation, inhibited by EDTA and bestatin in vitro. Is insensitive to papain, antipain, chymostatin, leupeptin, pepstatin and aprotinin. Functions as an aminopeptidase, with a clear preference for leucine as the N-terminal amino acid. However, can also cleave moderately long polypeptide substrates of various compositions in a fairly unspecific manner. Has neither carboxypeptidase nor endoproteolytic activities, and it is devoid of N-terminal deblocking activity. Is involved in protein degradation, performing degradation of oligopeptides produced by the proteasome into single amino acids. The protein is Tetrahedral aminopeptidase (frvX) of Pyrococcus horikoshii (strain ATCC 700860 / DSM 12428 / JCM 9974 / NBRC 100139 / OT-3).